A 261-amino-acid polypeptide reads, in one-letter code: X-box-binding protein 1 (261 aa).

Residues 1–185 (MVVVAPAQSP…VQAQLSPLQN (185 aa)) lie on the Cytoplasmic side of the membrane. Positions 27 to 37 (TGGAPAGRALP) are enriched in low complexity. The tract at residues 27–65 (TGGAPAGRALPVMVPGQQGASPEGASGVPPQARKRQRLT) is disordered. A phosphoserine mark is found at serine 47 and serine 68. The region spanning 70–133 (EEKALRRKLK…HGLVVENQEL (64 aa)) is the bZIP domain. Residues 72 to 94 (KALRRKLKNRVAAQTARDRKKAR) are basic motif. Positions 76–92 (RKLKNRVAAQTARDRKK) are nuclear localization signal (NLS). A leucine-zipper region spans residues 98–133 (LEQQVVDLEEENQKLLLENQLLREKTHGLVVENQEL). A helical; Signal-anchor for type II membrane protein membrane pass occupies residues 186 to 203 (ISPWTLMALTLQTLSLTS). Residues 204 to 261 (CWAFCSTWTQSCSSDVLPQSLPAWSSSQKWTQKDPVPYRPPLLHPWGRHQPSWKPLMN) lie on the Lumenal side of the membrane.

This sequence belongs to the bZIP family. Isoform 1 interacts with HM13. Isoform 1 interacts with RNF139; the interaction induces ubiquitination and degradation of isoform 1. Isoform 1 interacts (via luminal domain) with DERL1; the interaction obviates the need for ectodomain shedding prior HM13/SPP-mediated XBP1 isoform 1 cleavage. Isoform 1 interacts with HDAC3 and AKT1; the interactions occur in endothelial cell (EC) under disturbed flow. Isoform 1 interacts with the oncoprotein FOS. Interacts with SIRT1. Isoform 1 is ubiquitinated, leading to proteasome-mediated degradation in response to ER stress. Post-translationally, X-box-binding protein 1, cytoplasmic form and luminal form are produced by intramembrane proteolytic cleavage of ER membrane-anchored isoform 1 triggered by HM13/SPP in a DERL1-RNF139-dependent and VCP/p97-independent manner. X-box-binding protein 1, luminal form is ubiquitinated leading to proteasomal degradation. In terms of processing, acetylated by EP300; acetylation positively regulates the transcriptional activity of XBP1. Deacetylated by SIRT1; deacetylation negatively regulates the transcriptional activity of XBP1.

It localises to the nucleus. The protein localises to the endoplasmic reticulum. It is found in the cytoplasm. Its subcellular location is the endoplasmic reticulum membrane. The protein resides in the membrane. In terms of biological role, functions as a transcription factor during endoplasmic reticulum (ER) stress by regulating the unfolded protein response (UPR). Required for cardiac myogenesis and hepatogenesis during embryonic development, and the development of secretory tissues such as exocrine pancreas and salivary gland. Involved in terminal differentiation of B lymphocytes to plasma cells and production of immunoglobulins. Modulates the cellular response to ER stress in a PIK3R-dependent manner. Binds to the cis-acting X box present in the promoter regions of major histocompatibility complex class II genes. Involved in VEGF-induced endothelial cell (EC) proliferation and retinal blood vessel formation during embryonic development but also for angiogenesis in adult tissues under ischemic conditions. Functions also as a major regulator of the UPR in obesity-induced insulin resistance and type 2 diabetes for the management of obesity and diabetes prevention. Its function is as follows. Acts as a weak transcriptional factor. Together with HDAC3, contributes to the activation of NFE2L2-mediated HMOX1 transcription factor gene expression in a PI(3)K/mTORC2/Akt-dependent signaling pathway leading to EC survival under disturbed flow/oxidative stress. Binds to the ER stress response element (ERSE) upon ER stress. Binds to the consensus 5'-GATGACGTG[TG]N(3)[AT]T-3' sequence related to cAMP responsive element (CRE)-like sequences. Associates preferentially to the HDAC3 gene promoter region in a static flow-dependent manner. Binds to the CDH5/VE-cadherin gene promoter region. This chain is X-box-binding protein 1, found in Bos taurus (Bovine).